Reading from the N-terminus, the 265-residue chain is Small ribosomal subunit protein eS4 (265 aa).

The 63-residue stretch at 42–104 folds into the S4 RNA-binding domain; the sequence is LPLILIIRNR…TNENYRLLYD (63 aa).

The protein belongs to the eukaryotic ribosomal protein eS4 family.

It is found in the cytoplasm. This Zea mays (Maize) protein is Small ribosomal subunit protein eS4 (RPS4).